The chain runs to 457 residues: ATP synthase subunit beta (457 aa).

An ATP-binding site is contributed by 147–154; the sequence is GGAGVGKT.

This sequence belongs to the ATPase alpha/beta chains family. As to quaternary structure, F-type ATPases have 2 components, CF(1) - the catalytic core - and CF(0) - the membrane proton channel. CF(1) has five subunits: alpha(3), beta(3), gamma(1), delta(1), epsilon(1). CF(0) has three main subunits: a(1), b(2) and c(9-12). The alpha and beta chains form an alternating ring which encloses part of the gamma chain. CF(1) is attached to CF(0) by a central stalk formed by the gamma and epsilon chains, while a peripheral stalk is formed by the delta and b chains.

Its subcellular location is the cell inner membrane. The catalysed reaction is ATP + H2O + 4 H(+)(in) = ADP + phosphate + 5 H(+)(out). In terms of biological role, produces ATP from ADP in the presence of a proton gradient across the membrane. The catalytic sites are hosted primarily by the beta subunits. In Histophilus somni (strain 129Pt) (Haemophilus somnus), this protein is ATP synthase subunit beta.